The primary structure comprises 177 residues: ATP synthase subunit delta (177 aa).

The protein belongs to the ATPase delta chain family. As to quaternary structure, F-type ATPases have 2 components, F(1) - the catalytic core - and F(0) - the membrane proton channel. F(1) has five subunits: alpha(3), beta(3), gamma(1), delta(1), epsilon(1). F(0) has three main subunits: a(1), b(2) and c(10-14). The alpha and beta chains form an alternating ring which encloses part of the gamma chain. F(1) is attached to F(0) by a central stalk formed by the gamma and epsilon chains, while a peripheral stalk is formed by the delta and b chains.

Its subcellular location is the cell inner membrane. In terms of biological role, f(1)F(0) ATP synthase produces ATP from ADP in the presence of a proton or sodium gradient. F-type ATPases consist of two structural domains, F(1) containing the extramembraneous catalytic core and F(0) containing the membrane proton channel, linked together by a central stalk and a peripheral stalk. During catalysis, ATP synthesis in the catalytic domain of F(1) is coupled via a rotary mechanism of the central stalk subunits to proton translocation. Functionally, this protein is part of the stalk that links CF(0) to CF(1). It either transmits conformational changes from CF(0) to CF(1) or is implicated in proton conduction. The protein is ATP synthase subunit delta of Vibrio alginolyticus.